The sequence spans 801 residues: Phenylalanine--tRNA ligase beta subunit (801 aa).

Residues Ala39–Phe153 enclose the tRNA-binding domain. Residues Thr406 to Thr481 enclose the B5 domain. 4 residues coordinate Mg(2+): Asp459, Asp465, Glu468, and Glu469. Positions Thr708–Arg801 constitute an FDX-ACB domain.

It belongs to the phenylalanyl-tRNA synthetase beta subunit family. Type 1 subfamily. In terms of assembly, tetramer of two alpha and two beta subunits. It depends on Mg(2+) as a cofactor.

The protein localises to the cytoplasm. The catalysed reaction is tRNA(Phe) + L-phenylalanine + ATP = L-phenylalanyl-tRNA(Phe) + AMP + diphosphate + H(+). This Streptococcus agalactiae serotype V (strain ATCC BAA-611 / 2603 V/R) protein is Phenylalanine--tRNA ligase beta subunit.